Here is a 902-residue protein sequence, read N- to C-terminus: Cytosolic 10-formyltetrahydrofolate dehydrogenase (902 aa).

The interval 1 to 310 (MKIAVIGQSL…PASQYYKTAD (310 aa)) is hydrolase domain. 88–90 (QFI) contacts (6R)-10-formyltetrahydrofolate. His-106 acts as the Proton donor in catalysis. Asp-142 serves as a coordination point for (6R)-10-formyltetrahydrofolate. Residues 318-395 (DEEKKFSEEI…EFIQMVVRRL (78 aa)) enclose the Carrier domain. An O-(pantetheine 4'-phosphoryl)serine modification is found at Ser-354. The aldehyde dehydrogenase domain stretch occupies residues 417–902 (TVKIPHQLFI…LKTKAVTIEY (486 aa)). NADP(+) is bound by residues 571–573 (IPW), 597–600 (KPAQ), 630–635 (GSLIGQ), 650–651 (GS), and 673–674 (EL). Residue Glu-673 is the Proton acceptor of the active site. Cys-707 acts as the Proton donor in catalysis. NADP(+)-binding positions include Lys-757 and 804 to 806 (ESF).

In the N-terminal section; belongs to the GART family. The protein in the C-terminal section; belongs to the aldehyde dehydrogenase family. ALDH1L subfamily. Homotetramer. Post-translationally, phosphopantetheinylation at Ser-354 by AASDHPPT is required for the formyltetrahydrofolate dehydrogenase activity.

Its subcellular location is the cytoplasm. It is found in the cytosol. It carries out the reaction (6R)-10-formyltetrahydrofolate + NADP(+) + H2O = (6S)-5,6,7,8-tetrahydrofolate + CO2 + NADPH + H(+). Cytosolic 10-formyltetrahydrofolate dehydrogenase that catalyzes the NADP(+)-dependent conversion of 10-formyltetrahydrofolate to tetrahydrofolate and carbon dioxide. May also have an NADP(+)-dependent aldehyde dehydrogenase activity towards formaldehyde, acetaldehyde, propionaldehyde, and benzaldehyde. Regulates reduced folate pools as well as glycine metabolism. The polypeptide is Cytosolic 10-formyltetrahydrofolate dehydrogenase (aldh1l1) (Xenopus tropicalis (Western clawed frog)).